A 316-amino-acid chain; its full sequence is Porphobilinogen deaminase (316 aa).

Cys245 carries the post-translational modification S-(dipyrrolylmethanemethyl)cysteine.

It belongs to the HMBS family. As to quaternary structure, monomer. The cofactor is dipyrromethane.

It carries out the reaction 4 porphobilinogen + H2O = hydroxymethylbilane + 4 NH4(+). The protein operates within porphyrin-containing compound metabolism; protoporphyrin-IX biosynthesis; coproporphyrinogen-III from 5-aminolevulinate: step 2/4. It participates in porphyrin-containing compound metabolism; chlorophyll biosynthesis. Tetrapolymerization of the monopyrrole PBG into the hydroxymethylbilane pre-uroporphyrinogen in several discrete steps. The protein is Porphobilinogen deaminase of Prochlorococcus marinus (strain AS9601).